The following is a 65-amino-acid chain: UPF0434 protein CPS_2127 (65 aa).

It belongs to the UPF0434 family.

The polypeptide is UPF0434 protein CPS_2127 (Colwellia psychrerythraea (strain 34H / ATCC BAA-681) (Vibrio psychroerythus)).